We begin with the raw amino-acid sequence, 405 residues long: MTKLRIAVQGCCHGQLNQIYKEVSRIHAKTPIDLLIILGDFQSIRDGQDFKSIAIPPKYQRLGDFISYYNNEIEAPVPTIFIGGNHESMRHLMLLPHGGYVAKNIFYMGYSNVIWFKGIRIGSLSGIWKEWDFNKQRPDWNDLENNNWKANIRNLYHVRISDIAPLFMIKHRIDIMLSHDWPNGVVYHGDTKHLLKLKPFFEQDIKEGKLGSPVTWQLLRDLRPQWWLSAHLHVRFMASIKHNKRSHEPPNKSTSKTKKNNNEIDLDLSSDEDERSGIMNCQEENEYDSKYGETRFLALDKCLPRRRWLEILEIEPDTSHASWKDENHRMFWDPEFINNLVICQKNKNLLSNKPFNSVNWIELSQSNREEGRDIDWENYAIPAYTLDIQKDEVRQTKAFISKFMT.

A divalent metal cation contacts are provided by Cys11, His13, Asp40, and Asn85. Positions 125–159 (SGIWKEWDFNKQRPDWNDLENNNWKANIRNLYHVR) are lariat recognition loop. The a divalent metal cation site is built by His179, His231, and His233. Positions 242–277 (HNKRSHEPPNKSTSKTKKNNNEIDLDLSSDEDERSG) are disordered. A compositionally biased stretch (acidic residues) spans 264 to 274 (IDLDLSSDEDE). Ser269 carries the post-translational modification Phosphoserine.

The protein belongs to the lariat debranching enzyme family. It depends on Fe(2+) as a cofactor. The cofactor is Zn(2+). Mn(2+) serves as cofactor.

The protein resides in the nucleus. It localises to the cytoplasm. Its activity is regulated as follows. Active in presence of diverse metals including Fe(2+), Zn(2+) and Mn(2+). Binds two metal cations in two adjacent alpha and beta metal-binding pockets. The activity is the highest with Fe(2+) bound to the 2 metal-binding sites. Activity is low with Zn(2+) and Mn(2+). Functionally, cleaves the 2'-5' phosphodiester linkage at the branch point of lariat intron pre-mRNAs after splicing and converts them into linear molecules that are subsequently degraded, thereby facilitating ribonucleotide turnover. It also participates in Ty1 retrovirus-like transposition via an RNA lariat intermediate in cDNA synthesis. The polypeptide is Lariat debranching enzyme (DBR1) (Saccharomyces cerevisiae (strain ATCC 204508 / S288c) (Baker's yeast)).